The following is a 245-amino-acid chain: Aliphatic sulfonates import ATP-binding protein SsuB 1 (245 aa).

In terms of domain architecture, ABC transporter spans leucine 9–tryptophan 227. Glycine 41–serine 48 is a binding site for ATP.

It belongs to the ABC transporter superfamily. Aliphatic sulfonates importer (TC 3.A.1.17.2) family. As to quaternary structure, the complex is composed of two ATP-binding proteins (SsuB), two transmembrane proteins (SsuC) and a solute-binding protein (SsuA).

It localises to the cell membrane. It carries out the reaction ATP + H2O + aliphatic sulfonate-[sulfonate-binding protein]Side 1 = ADP + phosphate + aliphatic sulfonateSide 2 + [sulfonate-binding protein]Side 1.. Its function is as follows. Part of the ABC transporter complex SsuABC involved in aliphatic sulfonates import. Responsible for energy coupling to the transport system. The protein is Aliphatic sulfonates import ATP-binding protein SsuB 1 of Rhodococcus jostii (strain RHA1).